The chain runs to 78 residues: Large ribosomal subunit protein uL24 (78 aa).

This sequence belongs to the universal ribosomal protein uL24 family. In terms of assembly, part of the 50S ribosomal subunit.

One of two assembly initiator proteins, it binds directly to the 5'-end of the 23S rRNA, where it nucleates assembly of the 50S subunit. Its function is as follows. One of the proteins that surrounds the polypeptide exit tunnel on the outside of the subunit. The protein is Large ribosomal subunit protein uL24 of Campylobacter curvus (strain 525.92).